Here is a 638-residue protein sequence, read N- to C-terminus: 1-deoxy-D-xylulose-5-phosphate synthase (638 aa).

Thiamine diphosphate-binding positions include His-71 and 112–114 (SHA). A Mg(2+)-binding site is contributed by Asp-144. Thiamine diphosphate is bound by residues 145-146 (GA), Asn-173, Tyr-284, and Glu-365. A Mg(2+)-binding site is contributed by Asn-173.

Belongs to the transketolase family. DXPS subfamily. As to quaternary structure, homodimer. Mg(2+) is required as a cofactor. Requires thiamine diphosphate as cofactor.

The catalysed reaction is D-glyceraldehyde 3-phosphate + pyruvate + H(+) = 1-deoxy-D-xylulose 5-phosphate + CO2. Its pathway is metabolic intermediate biosynthesis; 1-deoxy-D-xylulose 5-phosphate biosynthesis; 1-deoxy-D-xylulose 5-phosphate from D-glyceraldehyde 3-phosphate and pyruvate: step 1/1. Its function is as follows. Catalyzes the acyloin condensation reaction between C atoms 2 and 3 of pyruvate and glyceraldehyde 3-phosphate to yield 1-deoxy-D-xylulose-5-phosphate (DXP). This is 1-deoxy-D-xylulose-5-phosphate synthase from Mycobacterium sp. (strain JLS).